The sequence spans 278 residues: Undecaprenyl-diphosphatase (278 aa).

The next 8 membrane-spanning stretches (helical) occupy residues 2-22, 44-64, 85-105, 113-133, 150-170, 189-209, 223-243, and 253-273; these read ALVE…TEWL, AFME…VVLL, IEMW…GLLW, FYNY…FIVI, ITYT…IFPG, TVAA…ASAL, LMIL…SIKF, and FKIF…YFSA.

Belongs to the UppP family.

It is found in the cell membrane. The catalysed reaction is di-trans,octa-cis-undecaprenyl diphosphate + H2O = di-trans,octa-cis-undecaprenyl phosphate + phosphate + H(+). Functionally, catalyzes the dephosphorylation of undecaprenyl diphosphate (UPP). Confers resistance to bacitracin. The sequence is that of Undecaprenyl-diphosphatase from Desulfitobacterium hafniense (strain DSM 10664 / DCB-2).